A 315-amino-acid chain; its full sequence is Ribosomal RNA small subunit methyltransferase H (315 aa).

Residues 35-37 (GGH), aspartate 55, phenylalanine 79, aspartate 101, and glutamine 108 each bind S-adenosyl-L-methionine.

Belongs to the methyltransferase superfamily. RsmH family.

The protein localises to the cytoplasm. It catalyses the reaction cytidine(1402) in 16S rRNA + S-adenosyl-L-methionine = N(4)-methylcytidine(1402) in 16S rRNA + S-adenosyl-L-homocysteine + H(+). Its function is as follows. Specifically methylates the N4 position of cytidine in position 1402 (C1402) of 16S rRNA. In Sodalis glossinidius (strain morsitans), this protein is Ribosomal RNA small subunit methyltransferase H.